A 119-amino-acid chain; its full sequence is uncharacterized protein (119 aa).

This is an uncharacterized protein from Dactylococcopsis salina (Myxobaktron salinum).